The primary structure comprises 409 residues: Inner membrane transport protein YqeG (409 aa).

The Periplasmic segment spans residues 1-25; the sequence is MSNIWSKEETLWSFALYGTAVGAGT. The chain crosses the membrane as a helical span at residues 26–46; that stretch reads LFLPIQLGSAGAVVLFITALV. At 47–87 the chain is on the cytoplasmic side; it reads AWPLTYWPHKALCQFILSSKTSAGEGITGAVTHYYGKKIGN. Residues 88 to 108 form a helical membrane-spanning segment; the sequence is LITTLYFIAFFVVVLIYAVAI. Residues 109–127 are Periplasmic-facing; the sequence is TNSLTEQLAKHMVIDLRIR. A helical transmembrane segment spans residues 128–148; sequence MLVSLGVVLILNLIFLMGRHA. Residues 149–151 lie on the Cytoplasmic side of the membrane; that stretch reads TIR. Residues 152-172 form a helical membrane-spanning segment; it reads VMGFLVFPLIAYFLFLSIYLV. Topologically, residues 173–193 are periplasmic; that stretch reads GSWQPDLLTTQVEFNQNTLHQ. The chain crosses the membrane as a helical span at residues 194–214; the sequence is IWISIPVMVFAFSHTPIISTF. Residues 215–235 are Cytoplasmic-facing; the sequence is AIDRREKYGEHAMDKCKKIMK. A helical membrane pass occupies residues 236 to 256; it reads VAYLIICISVLFFVFSCLLSI. Over 257–276 the chain is Periplasmic; it reads PPSYIEAAKEEGVTILSALS. The chain crosses the membrane as a helical span at residues 277–297; the sequence is MLPNAPAWLSISGIIVAVVAM. Residues 298–329 are Cytoplasmic-facing; it reads SKSFLGTYFGVIEGATEVVKTTLQQVGVKKSR. The helical transmembrane segment at 330–350 threads the bilayer; it reads AFNRALSIMLVSLITFIVCCI. Residues 351-353 are Periplasmic-facing; that stretch reads NPN. A helical membrane pass occupies residues 354–374; the sequence is AISMIYAISGPLIAMILFIMP. The Cytoplasmic segment spans residues 375-388; sequence TLSTYLIPALKPWR. Residues 389 to 409 traverse the membrane as a helical segment; it reads SIGNLITLIVGILCVSVMFFS.

This sequence belongs to the amino acid/polyamine transporter 2 family. SdaC/TdcC subfamily.

It is found in the cell inner membrane. The protein is Inner membrane transport protein YqeG (yqeG) of Escherichia coli O6:H1 (strain CFT073 / ATCC 700928 / UPEC).